The primary structure comprises 764 residues: Serine/threonine-protein kinase MPS1 (764 aa).

Disordered stretches follow at residues 66 to 95, 197 to 216, and 258 to 316; these read EEMDRSSSRSHPPPSMGNLTSGHTSTSSHS, ELPLEDSHQTNFKETKRNTD, and QAAL…KSSI. A compositionally biased stretch (low complexity) spans 85–95; the sequence is TSGHTSTSSHS. The segment covering 201–216 has biased composition (basic and acidic residues); that stretch reads EDSHQTNFKETKRNTD. Low complexity-rich tracts occupy residues 272–292 and 306–315; these read KSRSSSSSLSSNNLLANKDNS and STGSSSSKSS. Residues 440–720 enclose the Protein kinase domain; it reads YEKIELLGRG…LSSTFLQPFM (281 aa). ATP contacts are provided by residues 446–454 and Lys-468; that span reads LGRGGSSRV. Asp-563 serves as the catalytic Proton acceptor.

Belongs to the protein kinase superfamily. Ser/Thr protein kinase family. Post-translationally, autophosphorylated.

It catalyses the reaction L-seryl-[protein] + ATP = O-phospho-L-seryl-[protein] + ADP + H(+). The catalysed reaction is L-threonyl-[protein] + ATP = O-phospho-L-threonyl-[protein] + ADP + H(+). It carries out the reaction L-tyrosyl-[protein] + ATP = O-phospho-L-tyrosyl-[protein] + ADP + H(+). Involved in mitotic spindle assembly checkpoint signaling, a process that delays anaphase until chromosomes are bioriented on the spindle, and in the repair of incorrect mitotic kinetochore-spindle microtubule attachments. Phosphorylates SPC105 on MELT motifs; phosphorylation is required for recruitment of the BUB1-BUB3 complex to kinetochores. Phosphorylates CNN1, which contributes to the enrichment of CNN1 on anaphase kinetochores. Implicated in spindle pole body (SPD) duplication. Phosphorylates the SPC29 and SPC110 spindle pole body components. The polypeptide is Serine/threonine-protein kinase MPS1 (MPS1) (Saccharomyces cerevisiae (strain ATCC 204508 / S288c) (Baker's yeast)).